The following is a 333-amino-acid chain: S-adenosylmethionine-dependent nucleotide dehydratase (333 aa).

In terms of domain architecture, Radical SAM core spans 1–239 (MNIKTIVINW…SAPQKQNNVI (239 aa)). Residues Cys-16, Cys-20, and Cys-23 each contribute to the [4Fe-4S] cluster site.

Belongs to the radical SAM superfamily. Viperin family. [4Fe-4S] cluster is required as a cofactor.

It carries out the reaction GTP + AH2 + S-adenosyl-L-methionine = 3'-deoxy-3',4'-didehydro-GTP + 5'-deoxyadenosine + L-methionine + A + H2O + H(+). Functionally, expression of pVip56 in E.coli (strain MG1655) confers resistance to phage P1; has no effect against T7. Catalyzes the conversion of guanosine triphosphate (GTP) to 3'-deoxy-3',4'-didehydro-GTP (ddhGTP), probably via a SAM-dependent radical mechanism. The modified nucleotide represses transcription from T7 RNA polymerase-directed genes (possibly by acting as chain terminators), strongly suggesting these nucleotides block viral polymerase transcription. How this protein allows bacteria to resist viruses that do not encode their own RNA polymerase (such as lambda, P1) is unknown. This Fibrobacter sp. (strain UWH6) protein is S-adenosylmethionine-dependent nucleotide dehydratase.